A 317-amino-acid polypeptide reads, in one-letter code: 4-hydroxy-3-methylbut-2-enyl diphosphate reductase (317 aa).

Cysteine 12 serves as a coordination point for [4Fe-4S] cluster. (2E)-4-hydroxy-3-methylbut-2-enyl diphosphate contacts are provided by histidine 41 and histidine 74. Positions 41 and 74 each coordinate dimethylallyl diphosphate. The isopentenyl diphosphate site is built by histidine 41 and histidine 74. Cysteine 97 contributes to the [4Fe-4S] cluster binding site. Histidine 125 lines the (2E)-4-hydroxy-3-methylbut-2-enyl diphosphate pocket. Residue histidine 125 participates in dimethylallyl diphosphate binding. Histidine 125 is an isopentenyl diphosphate binding site. Glutamate 127 functions as the Proton donor in the catalytic mechanism. Threonine 168 contributes to the (2E)-4-hydroxy-3-methylbut-2-enyl diphosphate binding site. Cysteine 198 contacts [4Fe-4S] cluster. Serine 226, serine 227, asparagine 228, and serine 270 together coordinate (2E)-4-hydroxy-3-methylbut-2-enyl diphosphate. The dimethylallyl diphosphate site is built by serine 226, serine 227, asparagine 228, and serine 270. Serine 226, serine 227, asparagine 228, and serine 270 together coordinate isopentenyl diphosphate.

This sequence belongs to the IspH family. Homodimer. It depends on [4Fe-4S] cluster as a cofactor.

It catalyses the reaction isopentenyl diphosphate + 2 oxidized [2Fe-2S]-[ferredoxin] + H2O = (2E)-4-hydroxy-3-methylbut-2-enyl diphosphate + 2 reduced [2Fe-2S]-[ferredoxin] + 2 H(+). It carries out the reaction dimethylallyl diphosphate + 2 oxidized [2Fe-2S]-[ferredoxin] + H2O = (2E)-4-hydroxy-3-methylbut-2-enyl diphosphate + 2 reduced [2Fe-2S]-[ferredoxin] + 2 H(+). It functions in the pathway isoprenoid biosynthesis; dimethylallyl diphosphate biosynthesis; dimethylallyl diphosphate from (2E)-4-hydroxy-3-methylbutenyl diphosphate: step 1/1. It participates in isoprenoid biosynthesis; isopentenyl diphosphate biosynthesis via DXP pathway; isopentenyl diphosphate from 1-deoxy-D-xylulose 5-phosphate: step 6/6. Its function is as follows. Catalyzes the conversion of 1-hydroxy-2-methyl-2-(E)-butenyl 4-diphosphate (HMBPP) into a mixture of isopentenyl diphosphate (IPP) and dimethylallyl diphosphate (DMAPP). Acts in the terminal step of the DOXP/MEP pathway for isoprenoid precursor biosynthesis. The chain is 4-hydroxy-3-methylbut-2-enyl diphosphate reductase from Yersinia pestis bv. Antiqua (strain Antiqua).